Consider the following 266-residue polypeptide: Hemin import ATP-binding protein HmuV (266 aa).

In terms of domain architecture, ABC transporter spans 2-242 (IEAVDICVQR…QNLRDVYSCS (241 aa)). 34-41 (GPNGSGKS) contributes to the ATP binding site.

This sequence belongs to the ABC transporter superfamily. Heme (hemin) importer (TC 3.A.1.14.5) family. In terms of assembly, the complex is composed of two ATP-binding proteins (HmuV), two transmembrane proteins (HmuU) and a solute-binding protein (HmuT).

It localises to the cell inner membrane. Functionally, part of the ABC transporter complex HmuTUV involved in hemin import. Responsible for energy coupling to the transport system. The polypeptide is Hemin import ATP-binding protein HmuV (Bartonella henselae (strain ATCC 49882 / DSM 28221 / CCUG 30454 / Houston 1) (Rochalimaea henselae)).